Reading from the N-terminus, the 176-residue chain is 3-hydroxydecanoyl-[acyl-carrier-protein] dehydratase (176 aa).

Residue His70 is part of the active site.

This sequence belongs to the thioester dehydratase family. FabA subfamily. In terms of assembly, homodimer.

Its subcellular location is the cytoplasm. It catalyses the reaction a (3R)-hydroxyacyl-[ACP] = a (2E)-enoyl-[ACP] + H2O. The catalysed reaction is (3R)-hydroxydecanoyl-[ACP] = (2E)-decenoyl-[ACP] + H2O. It carries out the reaction (2E)-decenoyl-[ACP] = (3Z)-decenoyl-[ACP]. It functions in the pathway lipid metabolism; fatty acid biosynthesis. Necessary for the introduction of cis unsaturation into fatty acids. Catalyzes the dehydration of (3R)-3-hydroxydecanoyl-ACP to E-(2)-decenoyl-ACP and then its isomerization to Z-(3)-decenoyl-ACP. Can catalyze the dehydratase reaction for beta-hydroxyacyl-ACPs with saturated chain lengths up to 16:0, being most active on intermediate chain length. The polypeptide is 3-hydroxydecanoyl-[acyl-carrier-protein] dehydratase (Alkalilimnicola ehrlichii (strain ATCC BAA-1101 / DSM 17681 / MLHE-1)).